The sequence spans 349 residues: Fe(3+) ions import ATP-binding protein FbpC (349 aa).

Positions 4–236 (LELHHIGKSY…PVDEPTATFL (233 aa)) constitute an ABC transporter domain. 36-43 (GPSGSGKT) provides a ligand contact to ATP.

The protein belongs to the ABC transporter superfamily. Fe(3+) ion importer (TC 3.A.1.10) family. In terms of assembly, the complex is composed of two ATP-binding proteins (FbpC), two transmembrane proteins (FbpB) and a solute-binding protein (FbpA).

It localises to the cell inner membrane. It carries out the reaction Fe(3+)(out) + ATP + H2O = Fe(3+)(in) + ADP + phosphate + H(+). Functionally, part of the ABC transporter complex FbpABC involved in Fe(3+) ions import. Responsible for energy coupling to the transport system. This Yersinia pseudotuberculosis serotype I (strain IP32953) protein is Fe(3+) ions import ATP-binding protein FbpC.